A 775-amino-acid polypeptide reads, in one-letter code: Endothelin-converting enzyme-like 1 (775 aa).

The Cytoplasmic segment spans residues 1–59; it reads MEPPYSLTAHYDEFQEVKYVSRCGAGGARGASLPPGFPLGAARSATGARSGLPRWNRRE. Residues 60 to 82 form a helical; Signal-anchor for type II membrane protein membrane-spanning segment; that stretch reads VCLLSGLVFAAGLCAILAAMLAL. The Lumenal portion of the chain corresponds to 83–775; that stretch reads KYLGPVAAGG…MNPAHKCSVW (693 aa). One can recognise a Peptidase M13 domain in the interval 98 to 775; that stretch reads GCPERKAFAR…MNPAHKCSVW (678 aa). 4 cysteine pairs are disulfide-bonded: C123–C760, C131–C720, C187–C441, and C649–C772. N-linked (GlcNAc...) asparagine glycans are attached at residues N255 and N322. H612 contributes to the Zn(2+) binding site. Residue E613 is part of the active site. Zn(2+) is bound at residue H616. A glycan (N-linked (GlcNAc...) asparagine) is linked at N656. E672 lines the Zn(2+) pocket. The active-site Proton donor is the D676.

It belongs to the peptidase M13 family. Zn(2+) is required as a cofactor. Post-translationally, N-glycosylated. In terms of tissue distribution, highly expressed in the CNS, in particular in putamen, spinal cord, medulla and subthalamic nucleus. A strong signal was also detected in uterine subepithelial cells and around renal blood vessels. Detected at lower levels in amygdala, caudate, thalamus, pancreas and skeletal muscle. Detected at very low levels in substantia nigra, cerebellum, cortex, corpus callosum and hippocampus.

The protein localises to the membrane. Its function is as follows. May contribute to the degradation of peptide hormones and be involved in the inactivation of neuronal peptides. This Homo sapiens (Human) protein is Endothelin-converting enzyme-like 1 (ECEL1).